The chain runs to 158 residues: Mitotic-spindle organizing protein 2A (158 aa).

A Phosphoserine modification is found at Ser34. The tract at residues 84 to 158 is disordered; it reads RLASEPQDPA…PGKSPTQGST (75 aa). The segment covering 112 to 122 has biased composition (low complexity); that stretch reads SAALGGVLALA. Residues 128 to 140 are compositionally biased toward polar residues; that stretch reads EGSSQRMPRQPSA. Ser152 carries the phosphoserine modification.

This sequence belongs to the MOZART2 family. Associates with the gamma-tubulin ring complex (gTuRC) consisting of TUBGCP2, TUBGCP3, TUBGCP4, TUBGCP5 and TUBGCP6 and gamma-tubulin TUBG1 or TUBG2; within the complex, interacts with TUBGCP2; the interaction plays a role in gTuRC activation.

It is found in the cytoplasm. It localises to the cytoskeleton. The protein localises to the microtubule organizing center. Its subcellular location is the centrosome. The protein resides in the spindle. Its function is as follows. Required for the recruitment and the assembly of the gamma-tubulin ring complex (gTuRC) at the centrosome. The gTuRC regulates the minus-end nucleation of alpha-beta tubulin heterodimers that grow into microtubule protafilaments, a critical step in centrosome duplication and spindle formation. This chain is Mitotic-spindle organizing protein 2A (MZT2A), found in Homo sapiens (Human).